We begin with the raw amino-acid sequence, 206 residues long: Probable glutathione peroxidase 3, mitochondrial (206 aa).

A mitochondrion-targeting transit peptide spans 1–12 (MPRSSRWVNQRA). Cysteine 80 is an active-site residue.

This sequence belongs to the glutathione peroxidase family. As to quaternary structure, interacts with ABI1 and ABI2. As to expression, ubiquitous.

The protein localises to the mitochondrion. It carries out the reaction 2 glutathione + H2O2 = glutathione disulfide + 2 H2O. With respect to regulation, the redox states are modulated by H(2)O(2). Its function is as follows. May constitute a glutathione peroxidase-like protective system against oxidative stresses. Involved positively in abscisic acid (ABA) signaling pathway that regulates numerous ABA responses, such as stomatal closure, seed germination and inhibition of vegetative growth. Oxidizes and represses target proteins (e.g. the phosphatase activity of ABI1 and ABI2) when oxidized by H(2)O(2), probably after ABA signaling. Modulates the calcium channel activity in guard cells in response to ABA or H(2)O(2). Confers tolerance to drought stress, by enhancing the ABA-dependent stomatal closure. This chain is Probable glutathione peroxidase 3, mitochondrial (GPX3), found in Arabidopsis thaliana (Mouse-ear cress).